We begin with the raw amino-acid sequence, 122 residues long: Large ribosomal subunit protein uL14c (122 aa).

This sequence belongs to the universal ribosomal protein uL14 family. In terms of assembly, part of the 50S ribosomal subunit.

The protein localises to the plastid. The protein resides in the chloroplast. Its function is as follows. Binds to 23S rRNA. The protein is Large ribosomal subunit protein uL14c of Eucalyptus globulus subsp. globulus (Tasmanian blue gum).